A 548-amino-acid chain; its full sequence is ATP synthase subunit alpha (548 aa).

172–179 (GDRKTGKT) is an ATP binding site. The interval 511–548 (FETTSGESVVPDENVEAMSEDDVEKESVKVRKPAPKKK) is disordered. Over residues 523-534 (ENVEAMSEDDVE) the composition is skewed to acidic residues.

This sequence belongs to the ATPase alpha/beta chains family. In terms of assembly, F-type ATPases have 2 components, CF(1) - the catalytic core - and CF(0) - the membrane proton channel. CF(1) has five subunits: alpha(3), beta(3), gamma(1), delta(1), epsilon(1). CF(0) has three main subunits: a(1), b(2) and c(9-12). The alpha and beta chains form an alternating ring which encloses part of the gamma chain. CF(1) is attached to CF(0) by a central stalk formed by the gamma and epsilon chains, while a peripheral stalk is formed by the delta and b chains.

Its subcellular location is the cell membrane. It catalyses the reaction ATP + H2O + 4 H(+)(in) = ADP + phosphate + 5 H(+)(out). In terms of biological role, produces ATP from ADP in the presence of a proton gradient across the membrane. The alpha chain is a regulatory subunit. This Mycobacterium sp. (strain JLS) protein is ATP synthase subunit alpha.